We begin with the raw amino-acid sequence, 318 residues long: NAC domain-containing protein 68 (318 aa).

One can recognise an NAC domain in the interval 21 to 175 (LPPGFRFHPT…EWVLCRLYNK (155 aa)).

Expressed in stems, leaf blades and callus. Weakly expressed in developing flowers.

It localises to the nucleus. In terms of biological role, probable transcription factor involved in stress response. In Oryza sativa subsp. japonica (Rice), this protein is NAC domain-containing protein 68.